We begin with the raw amino-acid sequence, 429 residues long: MKLQKPKGTQDILPAESAKWQYVEGFAREIFKRYNYAEVRTPIFEHYEVISRSVGDTTDIVTKEMYDFYDKGDRHITLRPEGTAPVVRSYVENKLFAPEVQKPSKFYYMGPMFRYERPQAGRLRQFHQIGVECFGSSNPATDVETIAMAAHFLKEIGIQGVKLHLNTLGNPESRAAYRQALIDYLTPLKETLSKDSQRRLEENPLRVLDSKEKEDKVAVENAPSILDFLDEESQAHFDAVRQMLENLGVDYIIDTNMVRGLDYYNHTIFEFITEIEGNDLTVCAGGRYDGLVAYFGGPETAGFGFGLGVERLLLILEKQGVTLPIENALDVYIAVLGEGANIKALELVQALRQQGFKAERDYLNRKLKAQFKSADVFAAKTLITLGESEVESGQVTVKNNQTREEVQVSLETISQNFSEIFEKLGFYTQ.

This sequence belongs to the class-II aminoacyl-tRNA synthetase family. As to quaternary structure, homodimer.

It localises to the cytoplasm. It catalyses the reaction tRNA(His) + L-histidine + ATP = L-histidyl-tRNA(His) + AMP + diphosphate + H(+). The protein is Histidine--tRNA ligase of Streptococcus pneumoniae serotype 4 (strain ATCC BAA-334 / TIGR4).